A 167-amino-acid polypeptide reads, in one-letter code: uncharacterized protein (167 aa).

Residues 28–59 (LTGIREELKADIDETRLIAESVLEEKEKKVVE) adopt a coiled-coil conformation.

This is an uncharacterized protein from Aquifex aeolicus (strain VF5).